The following is a 212-amino-acid chain: Peptide methionine sulfoxide reductase MsrA (212 aa).

C52 is an active-site residue.

The protein belongs to the MsrA Met sulfoxide reductase family.

The catalysed reaction is L-methionyl-[protein] + [thioredoxin]-disulfide + H2O = L-methionyl-(S)-S-oxide-[protein] + [thioredoxin]-dithiol. It carries out the reaction [thioredoxin]-disulfide + L-methionine + H2O = L-methionine (S)-S-oxide + [thioredoxin]-dithiol. Has an important function as a repair enzyme for proteins that have been inactivated by oxidation. Catalyzes the reversible oxidation-reduction of methionine sulfoxide in proteins to methionine. The polypeptide is Peptide methionine sulfoxide reductase MsrA (Salmonella agona (strain SL483)).